The sequence spans 122 residues: MAPKKAPAATTEKKVKKAPTTEKKNKKKRSETFAIYIFKVLKQVHPDVGISKKAMNIMNSFINDSFERIALESSKLVRFNKRRTLSSREVQTAVKLLLPGELARHAISEGTKAVTKFSSSSN.

A compositionally biased stretch (low complexity) spans 1–10 (MAPKKAPAAT). Residues 1-28 (MAPKKAPAATTEKKVKKAPTTEKKNKKK) form a disordered region. The residue at position 2 (Ala-2) is a N,N,N-trimethylalanine. N6-acetyllysine occurs at positions 5 and 42. Residue Lys-116 forms a Glycyl lysine isopeptide (Lys-Gly) (interchain with G-Cter in ubiquitin) linkage.

The protein belongs to the histone H2B family. As to quaternary structure, the nucleosome is a histone octamer containing two molecules each of H2A, H2B, H3 and H4 assembled in one H3-H4 heterotetramer and two H2A-H2B heterodimers. The octamer wraps approximately 147 bp of DNA. In terms of processing, acetylation occurs almost exclusively in the MAC. Post-translationally, monoubiquitination to form H2BK115ub1 gives a specific tag for epigenetic transcriptional activation and is also prerequisite for H3K4me and H3K79me formation.

The protein resides in the nucleus. The protein localises to the chromosome. Functionally, core component of nucleosome. Nucleosomes wrap and compact DNA into chromatin, limiting DNA accessibility to the cellular machineries which require DNA as a template. Histones thereby play a central role in transcription regulation, DNA repair, DNA replication and chromosomal stability. DNA accessibility is regulated via a complex set of post-translational modifications of histones, also called histone code, and nucleosome remodeling. This Tetrahymena thermophila (strain SB210) protein is Histone H2B.2 (HTB2).